The chain runs to 422 residues: Probable protease eep (422 aa).

Zn(2+) is bound at residue histidine 18. Glutamate 19 is an active-site residue. A Zn(2+)-binding site is contributed by histidine 22. Transmembrane regions (helical) follow at residues 176-196 (FAGP…AVFL), 349-369 (VVFL…LPIP), and 394-414 (EGII…LVTW). The region spanning 179–273 (PMNNFILGFI…EEQLTVTPEK (95 aa)) is the PDZ domain.

It belongs to the peptidase M50B family. Zn(2+) serves as cofactor.

It is found in the cell membrane. Involved in production of the peptide pheromone cAD1. The chain is Probable protease eep (eep) from Enterococcus faecalis (strain ATCC 700802 / V583).